Reading from the N-terminus, the 1203-residue chain is Zinc finger and BTB domain-containing protein 38 (1203 aa).

The BTB domain occupies 33–100; sequence CDVTIIVEDT…IYSSTVVVRR (68 aa). K43 is covalently cross-linked (Glycyl lysine isopeptide (Lys-Gly) (interchain with G-Cter in SUMO2)). Phosphoserine is present on S130. Glycyl lysine isopeptide (Lys-Gly) (interchain with G-Cter in SUMO2) cross-links involve residues K145, K148, K151, and K260. The disordered stretch occupies residues 230–334; that stretch reads EAYRSQPLRE…PSETPGPPAA (105 aa). Polar residues predominate over residues 269-280; the sequence is TQTQDSDSTTEN. Residues 299-522 are interaction with CBFA2T3; the sequence is PAPILSHSEP…RRYQCIFCLE (224 aa). A compositionally biased stretch (basic and acidic residues) spans 313 to 322; the sequence is GDVHFPREDE. A C2H2-type 1 zinc finger spans residues 341-363; that stretch reads YNCSCCSKSFDSSTLLGAHMQLH. Residues 370–394 form a C2H2-type 2; degenerate zinc finger; that stretch reads FVCKYCNKQFTTLNRLDRHEQICMR. 3 consecutive C2H2-type zinc fingers follow at residues 459–481, 487–509, and 515–538; these read YSCV…ANVH, YPCH…EIWH, and YQCI…KSFH. Glycyl lysine isopeptide (Lys-Gly) (interchain with G-Cter in SUMO2) cross-links involve residues K549 and K556. Composition is skewed to polar residues over residues 581–598, 607–628, 635–644, and 731–741; these read RNSS…NESP, LPSS…TSSP, PSWQGTPTSA, and SNHQSPSQPVA. 2 disordered regions span residues 581-644 and 731-776; these read RNSS…PTSA and SNHQ…VPCN. A compositionally biased stretch (basic and acidic residues) spans 747–757; it reads KDSKPEADKAS. Residues K750, K755, K796, K806, K813, K834, K842, and K849 each participate in a glycyl lysine isopeptide (Lys-Gly) (interchain with G-Cter in SUMO2) cross-link. Disordered regions lie at residues 857–882 and 895–914; these read KPKY…SPLG and FDEV…YYNY. A compositionally biased stretch (basic and acidic residues) spans 866–877; sequence TLPRESDPETRG. Residues K915, K971, K976, K984, K988, K998, K1024, and K1033 each participate in a glycyl lysine isopeptide (Lys-Gly) (interchain with G-Cter in SUMO2) cross-link. C2H2-type zinc fingers lie at residues 1017–1039, 1045–1067, 1073–1095, 1101–1123, and 1132–1154; these read YICE…MRCH, YQCK…ERIH, FICQ…ERIH, YHCQ…ERRH, and FACF…QKKH. Residues K1116, K1139, K1142, K1157, and K1190 each participate in a glycyl lysine isopeptide (Lys-Gly) (interchain with G-Cter in SUMO2) cross-link. The interval 1172 to 1203 is disordered; it reads NSDLLESQPCTDSEDSDQKDDIKKPLLKMSFE.

As to quaternary structure, interacts with CBFA2T3, ZBTB4 and RBBP6. In terms of processing, ubiquitinated by RBBP6; leading to its degradation by the proteasome. As to expression, widely expressed throughout the adult brain where it is found mainly in neurons. Also expressed in the adrenal medulla. Not detected in non-neural tissues including heart, spleen, liver and muscle. In the embryo, expressed in the developing brain and spinal cord but not in the migratory neural crest. Also expressed in the limbs, transiently in somites, and in the embryonic liver. In the embryonic neural tube, expression is restricted to late postmitotic neurons.

The protein localises to the nucleus. Its subcellular location is the chromosome. Its function is as follows. Transcriptional regulator with bimodal DNA-binding specificity. Binds with a higher affinity to methylated CpG dinucleotides in the consensus sequence 5'-CGCG-3' but can also bind to E-box elements (5'-CACGTG-3'). Can also bind specifically to a single methyl-CpG pair. Represses transcription in a methyl-CpG-dependent manner. Plays an important role in regulating DNA-replication and common fragile sites (CFS) stability in a RBBP6- and MCM10-dependent manner; represses expression of MCM10 which plays an important role in DNA-replication. Acts as a transcriptional activator. May be involved in the differentiation and/or survival of late postmitotic neurons. This is Zinc finger and BTB domain-containing protein 38 from Rattus norvegicus (Rat).